The chain runs to 358 residues: Tetraacyldisaccharide 4'-kinase (358 aa).

Residue 71–78 (IAGGAGKT) participates in ATP binding.

This sequence belongs to the LpxK family.

It carries out the reaction a lipid A disaccharide + ATP = a lipid IVA + ADP + H(+). It functions in the pathway glycolipid biosynthesis; lipid IV(A) biosynthesis; lipid IV(A) from (3R)-3-hydroxytetradecanoyl-[acyl-carrier-protein] and UDP-N-acetyl-alpha-D-glucosamine: step 6/6. Its function is as follows. Transfers the gamma-phosphate of ATP to the 4'-position of a tetraacyldisaccharide 1-phosphate intermediate (termed DS-1-P) to form tetraacyldisaccharide 1,4'-bis-phosphate (lipid IVA). This chain is Tetraacyldisaccharide 4'-kinase, found in Methylibium petroleiphilum (strain ATCC BAA-1232 / LMG 22953 / PM1).